The following is a 46-amino-acid chain: uncharacterized protein (46 aa).

This is an uncharacterized protein from Bacillus subtilis (strain 168).